A 436-amino-acid polypeptide reads, in one-letter code: Transcription factor Sox-10 (436 aa).

5 disordered regions span residues 1–55, 145–183, 195–257, 322–346, and 413–436; these read MSDD…ERFP, RLRM…AEGG, HLDH…DFGN, PQTD…QPST, and SPSV…LSRP. A Glycyl lysine isopeptide (Lys-Gly) (interchain with G-Cter in SUMO) cross-link involves residue Lys44. The interval 48–88 is dimerization (DIM); the sequence is DSEDERFPVCIREAVSQVLSGYDWTLVPMPVRVNGGSKSKP. The HMG box DNA-binding region spans 90–158; sequence VKRPMNAFMV…QHKKDHPDYK (69 aa). Residues 145–159 are compositionally biased toward basic and acidic residues; the sequence is RLRMQHKKDHPDYKY. Polar residues-rich tracts occupy residues 205 to 215 and 331 to 346; these read SDGNSEHSAGQ and KTES…QPST. Positions 209–295 are transactivation domain (TAM); sequence SEHSAGQSHG…NGHAGHPSHI (87 aa). Residues 327 to 436 form a transactivation domain (TAC) region; the sequence is KAQVKTESSS…QPVYTTLSRP (110 aa). Lys331 participates in a covalent cross-link: Glycyl lysine isopeptide (Lys-Gly) (interchain with G-Cter in SUMO).

Interacts with the sumoylation factors ube2i/ubc9 and sumo1. In terms of processing, sumoylated.

It localises to the cytoplasm. Its subcellular location is the nucleus. Its function is as follows. Acts early in neural crest formation, functioning redundantly with the other group E Sox factors sox8 and sox9 to induce neural crest progenitors. Acts downstream of wnt-signaling at the neural plate border. Involved in the specification of neural crest progenitors fated to form the pigment cell lineage. This chain is Transcription factor Sox-10, found in Xenopus tropicalis (Western clawed frog).